The following is a 67-amino-acid chain: Cold shock protein ScoF (67 aa).

Residues 4-64 enclose the CSD domain; sequence GTVKWFNSEK…GQKGPQAENI (61 aa).

The protein resides in the cytoplasm. This is Cold shock protein ScoF (scoF) from Streptomyces coelicolor (strain ATCC BAA-471 / A3(2) / M145).